The sequence spans 250 residues: 1-(5-phosphoribosyl)-5-[(5-phosphoribosylamino)methylideneamino] imidazole-4-carboxamide isomerase (250 aa).

Asp-12 serves as the catalytic Proton acceptor. Asp-134 serves as the catalytic Proton donor.

This sequence belongs to the HisA/HisF family.

It localises to the cytoplasm. It carries out the reaction 1-(5-phospho-beta-D-ribosyl)-5-[(5-phospho-beta-D-ribosylamino)methylideneamino]imidazole-4-carboxamide = 5-[(5-phospho-1-deoxy-D-ribulos-1-ylimino)methylamino]-1-(5-phospho-beta-D-ribosyl)imidazole-4-carboxamide. It functions in the pathway amino-acid biosynthesis; L-histidine biosynthesis; L-histidine from 5-phospho-alpha-D-ribose 1-diphosphate: step 4/9. In Actinobacillus pleuropneumoniae serotype 3 (strain JL03), this protein is 1-(5-phosphoribosyl)-5-[(5-phosphoribosylamino)methylideneamino] imidazole-4-carboxamide isomerase.